Consider the following 2566-residue polypeptide: Highly reducing polyketide synthase verA (2566 aa).

A Ketosynthase family 3 (KS3) domain is found at 3–440; that stretch reads PEPIAIIGTG…GTNAHAILES (438 aa). Residues 35-61 are disordered; it reads VASEPPSTRFDNRSFYDPDPSHPGTTN. Positions 44-54 are enriched in basic and acidic residues; it reads FDNRSFYDPDP. Active-site for beta-ketoacyl synthase activity residues include Cys176, His316, and His360. A malonyl-CoA:ACP transacylase (MAT) domain region spans residues 554–880; that stretch reads IFTGQGAQWP…IGLSNRGASG (327 aa). Ser648 acts as the For malonyltransferase activity in catalysis. The interval 950–1081 is N-terminal hotdog fold; that stretch reads HPLLGSLEAD…GKLLICWGNP (132 aa). A dehydratase (DH) domain region spans residues 950–1246; sequence HPLLGSLEAD…EGVHISPLGP (297 aa). The 301-residue stretch at 950–1250 folds into the PKS/mFAS DH domain; that stretch reads HPLLGSLEAD…ISPLGPPDRQ (301 aa). His982 acts as the Proton acceptor; for dehydratase activity in catalysis. The segment at 1096-1250 is C-terminal hotdog fold; the sequence is AGAVDIKDFY…ISPLGPPDRQ (155 aa). Asp1156 functions as the Proton donor; for dehydratase activity in the catalytic mechanism. A methyltransferase (CMet) domain region spans residues 1386 to 1581; the sequence is DVLSRFYKED…TGFGGIDTIT (196 aa). Positions 2127–2294 are ketoreductase (KR) domain; sequence KTYLLVGMTG…RRARNIVGSI (168 aa). Positions 2411–2489 constitute a Carrier domain; sequence EAAEIVAAGL…ALTADSVSKL (79 aa). Ser2449 is subject to O-(pantetheine 4'-phosphoryl)serine. A disordered region spans residues 2505–2540; the sequence is KDVSGLTSPPEVPSDASRSSVSSGMDEIVTPESPSF. Over residues 2518–2527 the composition is skewed to low complexity; the sequence is SDASRSSVSS.

The cofactor is pantetheine 4'-phosphate.

It functions in the pathway secondary metabolite biosynthesis; terpenoid biosynthesis. It participates in mycotoxin biosynthesis. In terms of biological role, highly reducing polyketide synthase (HR-PKS); part of the gene cluster that mediates the biosynthesis of the neurotoxin verrucosidin, a methylated alpha-pyrone polyketide that inhibits oxidative phosphorylation in mitochondria and thereby causes neurological diseases. The carbon backbone of verrucosidin is synthesized by the HR-PKS verA, and further modified by the other verrucodidin cluster enzymes. This chain is Highly reducing polyketide synthase verA, found in Penicillium polonicum.